A 566-amino-acid chain; its full sequence is Chaperone Ric-8 (566 aa).

This sequence belongs to the synembryn family. In terms of assembly, interacts with GDP-bound G(i)-alpha protein. Does not interact with G-alpha proteins when they are in complex with subunits beta and gamma. Interacts with Frq2 in a Ca(2+)-independent manner but does not interact with Frq1.

Its subcellular location is the cytoplasm. The protein resides in the cell cortex. It is found in the presynapse. In terms of biological role, chaperone that specifically binds and folds some, but not all, nascent G alpha proteins prior to G protein heterotrimer formation, promoting their stability and activity. Also acts as a guanine nucleotide exchange factor (GEF) for G alpha proteins by stimulating exchange of bound GDP for free GTP. Plays a key role in asymmetric spindle positioning, a step for asymmetric cell division that generates cell diversity during development by activating G(i) alpha protein independently of G-protein coupled receptors. Required during gastrulation and sensory organ precursor (SOP) formation. Plays a role in positively regulating synapse number and neurotransmitter release. This is Chaperone Ric-8 (ric8a) from Drosophila pseudoobscura pseudoobscura (Fruit fly).